The chain runs to 137 residues: Large-conductance mechanosensitive channel (137 aa).

2 helical membrane passes run 9 to 29 (AFAV…GAAF) and 79 to 99 (IQTI…VKAI).

The protein belongs to the MscL family. Homopentamer.

The protein resides in the cell inner membrane. Its function is as follows. Channel that opens in response to stretch forces in the membrane lipid bilayer. May participate in the regulation of osmotic pressure changes within the cell. In Pseudomonas paraeruginosa (strain DSM 24068 / PA7) (Pseudomonas aeruginosa (strain PA7)), this protein is Large-conductance mechanosensitive channel.